Consider the following 259-residue polypeptide: Ditrans,polycis-undecaprenyl-diphosphate synthase ((2E,6E)-farnesyl-diphosphate specific) (259 aa).

Asp-32 is an active-site residue. Asp-32 provides a ligand contact to Mg(2+). Substrate is bound by residues 33–36, Trp-37, Arg-45, His-49, and 77–79; these read GNGR and STE. The Proton acceptor role is filled by Asn-80. Substrate-binding positions include Trp-81, Arg-83, Arg-203, and 209-211; that span reads RIS. Glu-222 contributes to the Mg(2+) binding site.

It belongs to the UPP synthase family. Homodimer. Mg(2+) is required as a cofactor.

The catalysed reaction is 8 isopentenyl diphosphate + (2E,6E)-farnesyl diphosphate = di-trans,octa-cis-undecaprenyl diphosphate + 8 diphosphate. In terms of biological role, catalyzes the sequential condensation of isopentenyl diphosphate (IPP) with (2E,6E)-farnesyl diphosphate (E,E-FPP) to yield (2Z,6Z,10Z,14Z,18Z,22Z,26Z,30Z,34E,38E)-undecaprenyl diphosphate (di-trans,octa-cis-UPP). UPP is the precursor of glycosyl carrier lipid in the biosynthesis of bacterial cell wall polysaccharide components such as peptidoglycan and lipopolysaccharide. This Lactiplantibacillus plantarum (strain ATCC BAA-793 / NCIMB 8826 / WCFS1) (Lactobacillus plantarum) protein is Ditrans,polycis-undecaprenyl-diphosphate synthase ((2E,6E)-farnesyl-diphosphate specific) (uppS).